The primary structure comprises 239 residues: Ubiquinone biosynthesis O-methyltransferase (239 aa).

S-adenosyl-L-methionine is bound by residues R42, G62, D83, and M127.

Belongs to the methyltransferase superfamily. UbiG/COQ3 family.

It carries out the reaction a 3-demethylubiquinol + S-adenosyl-L-methionine = a ubiquinol + S-adenosyl-L-homocysteine + H(+). The catalysed reaction is a 3-(all-trans-polyprenyl)benzene-1,2-diol + S-adenosyl-L-methionine = a 2-methoxy-6-(all-trans-polyprenyl)phenol + S-adenosyl-L-homocysteine + H(+). The protein operates within cofactor biosynthesis; ubiquinone biosynthesis. O-methyltransferase that catalyzes the 2 O-methylation steps in the ubiquinone biosynthetic pathway. In Pectobacterium carotovorum subsp. carotovorum (strain PC1), this protein is Ubiquinone biosynthesis O-methyltransferase.